Reading from the N-terminus, the 322-residue chain is MSEIKTDDPKRGIKLRGADKTARIPIKVVPLQEKLKKPEWIRAKLPSRKFFEIKDILREQKMHTVCEEASCPNIGECFSKGTATFMIMGDICTRRCPFCDVGHGRPNMLDPDEPRNLAESVKAMNLRYVVITSVDRDDLRDGGAQHFADCIKAIRETSPNTKIEILVPDFRGRLDIALKILAETPPDVMNHNLETHPSLYRKARPGANYQHSLDLLKRYKEMMPHIPTKSGIMVGLGETDEDVREIMRDMRAHNIEMITIGQYLQPSDGHLPVLRYVTPEQFKIFEKEAYELGFSNAAIGAMVRSSYHADEQAAEALRECEF.

[4Fe-4S] cluster contacts are provided by cysteine 66, cysteine 71, cysteine 77, cysteine 92, cysteine 96, cysteine 99, and serine 306. Residues 78-295 (FSKGTATFMI…EKEAYELGFS (218 aa)) enclose the Radical SAM core domain.

The protein belongs to the radical SAM superfamily. Lipoyl synthase family. It depends on [4Fe-4S] cluster as a cofactor.

Its subcellular location is the cytoplasm. The catalysed reaction is [[Fe-S] cluster scaffold protein carrying a second [4Fe-4S](2+) cluster] + N(6)-octanoyl-L-lysyl-[protein] + 2 oxidized [2Fe-2S]-[ferredoxin] + 2 S-adenosyl-L-methionine + 4 H(+) = [[Fe-S] cluster scaffold protein] + N(6)-[(R)-dihydrolipoyl]-L-lysyl-[protein] + 4 Fe(3+) + 2 hydrogen sulfide + 2 5'-deoxyadenosine + 2 L-methionine + 2 reduced [2Fe-2S]-[ferredoxin]. Its pathway is protein modification; protein lipoylation via endogenous pathway; protein N(6)-(lipoyl)lysine from octanoyl-[acyl-carrier-protein]: step 2/2. In terms of biological role, catalyzes the radical-mediated insertion of two sulfur atoms into the C-6 and C-8 positions of the octanoyl moiety bound to the lipoyl domains of lipoate-dependent enzymes, thereby converting the octanoylated domains into lipoylated derivatives. The sequence is that of Lipoyl synthase from Neisseria meningitidis serogroup C (strain 053442).